The following is a 123-amino-acid chain: Ribosome-binding factor A (123 aa).

The protein belongs to the RbfA family. Monomer. Binds 30S ribosomal subunits, but not 50S ribosomal subunits or 70S ribosomes.

It is found in the cytoplasm. Its function is as follows. One of several proteins that assist in the late maturation steps of the functional core of the 30S ribosomal subunit. Associates with free 30S ribosomal subunits (but not with 30S subunits that are part of 70S ribosomes or polysomes). Required for efficient processing of 16S rRNA. May interact with the 5'-terminal helix region of 16S rRNA. This chain is Ribosome-binding factor A, found in Variovorax paradoxus (strain S110).